Reading from the N-terminus, the 260-residue chain is Methyl-coenzyme M reductase subunit gamma (260 aa).

Arginine 123 contacts coenzyme M.

The protein belongs to the methyl-coenzyme M reductase gamma subunit family. MCR is a hexamer of two alpha, two beta, and two gamma chains, forming a dimer of heterotrimers. It depends on coenzyme F430 as a cofactor.

It localises to the cytoplasm. The enzyme catalyses coenzyme B + methyl-coenzyme M = methane + coenzyme M-coenzyme B heterodisulfide. It functions in the pathway one-carbon metabolism; methyl-coenzyme M reduction; methane from methyl-coenzyme M: step 1/1. Its function is as follows. Component of the methyl-coenzyme M reductase (MCR) I that catalyzes the reductive cleavage of methyl-coenzyme M (CoM-S-CH3 or 2-(methylthio)ethanesulfonate) using coenzyme B (CoB or 7-mercaptoheptanoylthreonine phosphate) as reductant which results in the production of methane and the mixed heterodisulfide of CoB and CoM (CoM-S-S-CoB). This is the final step in methanogenesis. This chain is Methyl-coenzyme M reductase subunit gamma (mcrG), found in Methanococcus vannielii.